The sequence spans 110 residues: Insulin-2 (110 aa).

The first 24 residues, 1–24 (MALWIRFLPLLALLILWEPRPAQA), serve as a signal peptide directing secretion. 3 cysteine pairs are disulfide-bonded: Cys31-Cys96, Cys43-Cys109, and Cys95-Cys100. A propeptide spans 57-87 (EVEDPQVAQLELGGGPGAGDLQTLALEVARQ) (c peptide).

The protein belongs to the insulin family. Heterodimer of a B chain and an A chain linked by two disulfide bonds.

It localises to the secreted. Its function is as follows. Insulin decreases blood glucose concentration. It increases cell permeability to monosaccharides, amino acids and fatty acids. It accelerates glycolysis, the pentose phosphate cycle, and glycogen synthesis in liver. The polypeptide is Insulin-2 (Ins2) (Rattus norvegicus (Rat)).